The following is a 341-amino-acid chain: HTH-type transcriptional repressor PurR (341 aa).

Positions 2 to 56 (ATIKDVAKRAGVSTTTVSHVINKTRFVADETREAVWVAIKELHYSPSAVARSLKV) constitute an HTH lacI-type domain. A DNA-binding region (H-T-H motif) is located at residues 4–23 (IKDVAKRAGVSTTTVSHVIN). A DNA-binding region spans residues 48–56 (SAVARSLKV). Residues Tyr-73, Arg-190, Thr-192, Phe-221, and Asp-275 each coordinate hypoxanthine.

In terms of assembly, homodimer.

It participates in purine metabolism; purine nucleotide biosynthesis [regulation]. In terms of biological role, is the main repressor of the genes involved in the de novo synthesis of purine nucleotides, regulating purB, purC, purEK, purF, purHD, purL, purMN and guaBA expression. PurR is allosterically activated to bind its cognate DNA by binding the purine corepressors, hypoxanthine or guanine, thereby effecting transcription repression. This chain is HTH-type transcriptional repressor PurR, found in Erwinia tasmaniensis (strain DSM 17950 / CFBP 7177 / CIP 109463 / NCPPB 4357 / Et1/99).